A 305-amino-acid polypeptide reads, in one-letter code: UDP-3-O-acyl-N-acetylglucosamine deacetylase (305 aa).

The Zn(2+) site is built by His79, His238, and Asp242. His265 (proton donor) is an active-site residue.

Belongs to the LpxC family. Zn(2+) serves as cofactor.

It carries out the reaction a UDP-3-O-[(3R)-3-hydroxyacyl]-N-acetyl-alpha-D-glucosamine + H2O = a UDP-3-O-[(3R)-3-hydroxyacyl]-alpha-D-glucosamine + acetate. It functions in the pathway glycolipid biosynthesis; lipid IV(A) biosynthesis; lipid IV(A) from (3R)-3-hydroxytetradecanoyl-[acyl-carrier-protein] and UDP-N-acetyl-alpha-D-glucosamine: step 2/6. In terms of biological role, catalyzes the hydrolysis of UDP-3-O-myristoyl-N-acetylglucosamine to form UDP-3-O-myristoylglucosamine and acetate, the committed step in lipid A biosynthesis. In Mannheimia succiniciproducens (strain KCTC 0769BP / MBEL55E), this protein is UDP-3-O-acyl-N-acetylglucosamine deacetylase.